A 177-amino-acid polypeptide reads, in one-letter code: Large ribosomal subunit protein uL6 (177 aa).

The protein belongs to the universal ribosomal protein uL6 family. In terms of assembly, part of the 50S ribosomal subunit.

Its function is as follows. This protein binds to the 23S rRNA, and is important in its secondary structure. It is located near the subunit interface in the base of the L7/L12 stalk, and near the tRNA binding site of the peptidyltransferase center. This Histophilus somni (strain 129Pt) (Haemophilus somnus) protein is Large ribosomal subunit protein uL6.